The primary structure comprises 209 residues: CASP-like protein 1A1 (209 aa).

A disordered region spans residues 1-26 (MEEAKHNEAEEAQGIEAREAKQIEAG). Over 1–49 (MEEAKHNEAEEAQGIEAREAKQIEAGETSRSSRKLITFEPKLVINKGIS) the chain is Cytoplasmic. The chain crosses the membrane as a helical span at residues 50-70 (VLGFVLRLFAVFGTIGSALAM). The Extracellular segment spans residues 71-95 (GTTHESVVSLSQLVLLKVKYSDLPT). The helical transmembrane segment at 96 to 116 (LMFFVVANAISGGYLVLSLPV) threads the bilayer. At 117–130 (SIFHIFSTQAKTSR) the chain is on the cytoplasmic side. Residues 131–151 (IILLVVDTVMLALVSSGASAA) form a helical membrane-spanning segment. Residues 152-183 (TATVYLAHEGNTTANWPPICQQFDGFCERISG) are Extracellular-facing. Asparagine 162 is a glycosylation site (N-linked (GlcNAc...) asparagine). Residues 184–204 (SLIGSFCAVILLMLIVINSAI) form a helical membrane-spanning segment. At 205–209 (SLSRH) the chain is on the cytoplasmic side.

It belongs to the Casparian strip membrane proteins (CASP) family. Homodimer and heterodimers. In terms of tissue distribution, expressed in the root endodermis.

It localises to the cell membrane. In Arabidopsis thaliana (Mouse-ear cress), this protein is CASP-like protein 1A1.